The following is a 238-amino-acid chain: Small ribosomal subunit protein uS3 (238 aa).

The 70-residue stretch at 39–108 folds into the KH type-2 domain; the sequence is IRKFVKKKLF…NVAVNVIEVK (70 aa).

It belongs to the universal ribosomal protein uS3 family. In terms of assembly, part of the 30S ribosomal subunit. Forms a tight complex with proteins S10 and S14.

Functionally, binds the lower part of the 30S subunit head. Binds mRNA in the 70S ribosome, positioning it for translation. In Alkaliphilus oremlandii (strain OhILAs) (Clostridium oremlandii (strain OhILAs)), this protein is Small ribosomal subunit protein uS3.